The sequence spans 159 residues: Nutritionally-regulated adipose and cardiac-enriched protein homolog (159 aa).

Positions 1–67 are disordered; it reads MKTAVHALSP…GDEPRRTTRH (67 aa). Composition is skewed to basic and acidic residues over residues 12-25 and 50-63; these read SRPETQHQTRKNEE and SPQERCGRGDEPRR. Residues 107–124 form a helical membrane-spanning segment; the sequence is LTACILLALALGMCCGQA.

Its subcellular location is the cell membrane. The chain is Nutritionally-regulated adipose and cardiac-enriched protein homolog (NRAC) from Bos taurus (Bovine).